The sequence spans 466 residues: Argininosuccinate lyase (466 aa).

It belongs to the lyase 1 family. Argininosuccinate lyase subfamily.

The protein resides in the cytoplasm. The enzyme catalyses 2-(N(omega)-L-arginino)succinate = fumarate + L-arginine. Its pathway is amino-acid biosynthesis; L-arginine biosynthesis; L-arginine from L-ornithine and carbamoyl phosphate: step 3/3. In Synechococcus sp. (strain ATCC 27144 / PCC 6301 / SAUG 1402/1) (Anacystis nidulans), this protein is Argininosuccinate lyase.